Reading from the N-terminus, the 120-residue chain is NAD(P)H-quinone oxidoreductase subunit 3, chloroplastic (120 aa).

3 helical membrane passes run 9–29 (IFWA…LISG), 64–84 (MFAL…PWAM), and 88–108 (VLGV…ILGL).

This sequence belongs to the complex I subunit 3 family. As to quaternary structure, NDH is composed of at least 16 different subunits, 5 of which are encoded in the nucleus.

The protein localises to the plastid. It is found in the chloroplast thylakoid membrane. The enzyme catalyses a plastoquinone + NADH + (n+1) H(+)(in) = a plastoquinol + NAD(+) + n H(+)(out). It carries out the reaction a plastoquinone + NADPH + (n+1) H(+)(in) = a plastoquinol + NADP(+) + n H(+)(out). In terms of biological role, NDH shuttles electrons from NAD(P)H:plastoquinone, via FMN and iron-sulfur (Fe-S) centers, to quinones in the photosynthetic chain and possibly in a chloroplast respiratory chain. The immediate electron acceptor for the enzyme in this species is believed to be plastoquinone. Couples the redox reaction to proton translocation, and thus conserves the redox energy in a proton gradient. This is NAD(P)H-quinone oxidoreductase subunit 3, chloroplastic from Lobularia maritima (Sweet alyssum).